The sequence spans 114 residues: FK506-binding protein 1 (114 aa).

Ser2 bears the N-acetylserine mark. In terms of domain architecture, PPIase FKBP-type spans 26–114 (GDLVTIHYTG…VFDVELLKVN (89 aa)). Ser51 is subject to Phosphoserine.

This sequence belongs to the FKBP-type PPIase family. FKBP1 subfamily. Interacts with HOM3; the interaction is direct, plays a role in feedback inhibition of aspartokinase by threonine, and is inhibited by tacrolimus and sirolimus. Interacts with HMO1. Interacts with FAP1.

Its subcellular location is the cytoplasm. It is found in the mitochondrion. It carries out the reaction [protein]-peptidylproline (omega=180) = [protein]-peptidylproline (omega=0). Functionally, PPIases accelerate the folding of proteins. It catalyzes the cis-trans isomerization of proline imidic peptide bonds in oligopeptides. Plays a role in feedback inhibition of the pathway synthesizing the aspartate family of amino acids by binding to aspartokinase. The protein is FK506-binding protein 1 (FPR1) of Saccharomyces cerevisiae (strain ATCC 204508 / S288c) (Baker's yeast).